We begin with the raw amino-acid sequence, 210 residues long: Leucyl/phenylalanyl-tRNA--protein transferase (210 aa).

The protein belongs to the L/F-transferase family.

The protein localises to the cytoplasm. It carries out the reaction N-terminal L-lysyl-[protein] + L-leucyl-tRNA(Leu) = N-terminal L-leucyl-L-lysyl-[protein] + tRNA(Leu) + H(+). The catalysed reaction is N-terminal L-arginyl-[protein] + L-leucyl-tRNA(Leu) = N-terminal L-leucyl-L-arginyl-[protein] + tRNA(Leu) + H(+). The enzyme catalyses L-phenylalanyl-tRNA(Phe) + an N-terminal L-alpha-aminoacyl-[protein] = an N-terminal L-phenylalanyl-L-alpha-aminoacyl-[protein] + tRNA(Phe). In terms of biological role, functions in the N-end rule pathway of protein degradation where it conjugates Leu, Phe and, less efficiently, Met from aminoacyl-tRNAs to the N-termini of proteins containing an N-terminal arginine or lysine. This chain is Leucyl/phenylalanyl-tRNA--protein transferase, found in Ruegeria sp. (strain TM1040) (Silicibacter sp.).